The sequence spans 344 residues: Uroporphyrinogen decarboxylase (344 aa).

Residues 23-27 (RQAGR), Asp-73, Tyr-149, Thr-204, and His-321 contribute to the substrate site.

It belongs to the uroporphyrinogen decarboxylase family. As to quaternary structure, homodimer.

Its subcellular location is the cytoplasm. It catalyses the reaction uroporphyrinogen III + 4 H(+) = coproporphyrinogen III + 4 CO2. It functions in the pathway porphyrin-containing compound metabolism; protoporphyrin-IX biosynthesis; coproporphyrinogen-III from 5-aminolevulinate: step 4/4. Catalyzes the decarboxylation of four acetate groups of uroporphyrinogen-III to yield coproporphyrinogen-III. The polypeptide is Uroporphyrinogen decarboxylase (Francisella tularensis subsp. novicida (strain U112)).